The following is a 496-amino-acid chain: Isocitrate dehydrogenase [NADP] (496 aa).

The NADP(+) site is built by Leu88 and Thr90. Residues Ser98, Asn100, Arg104, Arg114, and Arg137 each contribute to the D-threo-isocitrate site. The NADP(+) site is built by Asn193, Gln229, and Lys232. Mg(2+) is bound at residue Asp248. NADP(+)-binding residues include Glu277, Gly281, Ser282, Ala283, Lys285, Tyr286, and Asn293.

Belongs to the isocitrate and isopropylmalate dehydrogenases family. Homodimer. It depends on Mg(2+) as a cofactor. Requires Mn(2+) as cofactor.

It carries out the reaction D-threo-isocitrate + NADP(+) = 2-oxoglutarate + CO2 + NADPH. Its function is as follows. Catalyzes the oxidative decarboxylation of isocitrate to 2-oxoglutarate and carbon dioxide with the concomitant reduction of NADP(+). The protein is Isocitrate dehydrogenase [NADP] (icd) of Thermus thermophilus (strain ATCC 27634 / DSM 579 / HB8).